Reading from the N-terminus, the 313-residue chain is Dehydrogenase/reductase SDR family member 1 (313 aa).

Ala-2 is modified (N-acetylalanine). Ile-19 provides a ligand contact to NAD(+). Residue Arg-21 is modified to Omega-N-methylarginine. Residue Asp-64 coordinates NAD(+). Ser-151 contacts substrate. Residues Tyr-163, Lys-167, and Thr-198 each coordinate NAD(+). Tyr-163 functions as the Proton acceptor in the catalytic mechanism. The segment at 235-313 is required for ER localization; sequence CVVALATDPN…WIIALYTSKF (79 aa).

The protein belongs to the short-chain dehydrogenases/reductases (SDR) family. In terms of tissue distribution, detected in heart, liver, adrenal glands, and at low levels in skeletal muscle, kidney, pancreas and brain.

It localises to the endoplasmic reticulum. It carries out the reaction 17alpha-estradiol + NADP(+) = estrone + NADPH + H(+). The enzyme catalyses testosterone + NADP(+) = androst-4-ene-3,17-dione + NADPH + H(+). It catalyses the reaction prostaglandin E1 + NADPH + H(+) = prostaglandin F1 + NADP(+). The catalysed reaction is isatin + NADPH + H(+) = 3-hydroxyindolin-2-one + NADP(+). Its function is as follows. NADPH-dependent oxidoreductase which catalyzes the reduction of steroids (estrone, androstene-3,17-dione and cortisone) as well as prostaglandin E1, isatin and xenobiotics in vitro. May have a role in steroid and/or xenobiotic metabolism. The polypeptide is Dehydrogenase/reductase SDR family member 1 (Homo sapiens (Human)).